Reading from the N-terminus, the 303-residue chain is Coenzyme PQQ synthesis protein B (303 aa).

The protein belongs to the PqqB family.

It functions in the pathway cofactor biosynthesis; pyrroloquinoline quinone biosynthesis. In terms of biological role, may be involved in the transport of PQQ or its precursor to the periplasm. This chain is Coenzyme PQQ synthesis protein B, found in Acinetobacter baumannii (strain SDF).